Here is a 395-residue protein sequence, read N- to C-terminus: D-serine dehydratase (395 aa).

Residue Lys46 is modified to N6-(pyridoxal phosphate)lysine. Residues Tyr184, Tyr191, Thr232, Gly254, and Asn255 each coordinate pyridoxal 5'-phosphate. Zn(2+)-binding residues include His365 and Cys367.

It belongs to the DSD1 family. It depends on pyridoxal 5'-phosphate as a cofactor. Zn(2+) is required as a cofactor.

The enzyme catalyses D-serine = pyruvate + NH4(+). Its function is as follows. Catalyzes the conversion of D-serine to pyruvate and ammonia. Plays a role in D-serine detoxification. The chain is D-serine dehydratase from Dictyostelium discoideum (Social amoeba).